The sequence spans 94 residues: Small ribosomal subunit protein uS19 (94 aa).

It belongs to the universal ribosomal protein uS19 family.

In terms of biological role, protein S19 forms a complex with S13 that binds strongly to the 16S ribosomal RNA. The polypeptide is Small ribosomal subunit protein uS19 (Clostridium botulinum (strain Langeland / NCTC 10281 / Type F)).